Here is a 373-residue protein sequence, read N- to C-terminus: Flagellar P-ring protein 1 (373 aa).

Residues 1-24 form the signal peptide; it reads MRGISRLYWSLVLICFAFAPIVEA.

Belongs to the FlgI family. In terms of assembly, the basal body constitutes a major portion of the flagellar organelle and consists of four rings (L,P,S, and M) mounted on a central rod.

The protein localises to the periplasm. It is found in the bacterial flagellum basal body. Functionally, assembles around the rod to form the L-ring and probably protects the motor/basal body from shearing forces during rotation. This is Flagellar P-ring protein 1 from Hahella chejuensis (strain KCTC 2396).